Reading from the N-terminus, the 82-residue chain is U10-myrmicitoxin-Mri1c (82 aa).

Positions 1–26 (MRLSYVSLTLAIIFVMAIVHAPETEA) are cleaved as a signal peptide. A propeptide spanning residues 27-52 (KAYPEADAVGEASAVGEADAVGVADP) is cleaved from the precursor. Position 81 is an isoleucine amide (isoleucine 81).

Belongs to the formicidae venom precursor-01 superfamily. In terms of tissue distribution, expressed by the venom gland.

The protein localises to the secreted. Its function is as follows. Induces paralysis 5 minutes after injection into blowflies (L.caesar). In most cases is not lethal 24 hours after injection, but paralysis is irreversible. May have antimicrobial properties, like most ant linear peptides. This chain is U10-myrmicitoxin-Mri1c, found in Manica rubida (European giant red ant).